A 199-amino-acid chain; its full sequence is Recombination protein RecR (199 aa).

The C4-type zinc-finger motif lies at 57 to 72 (CSICGNITEGDPCSIC). One can recognise a Toprim domain in the interval 80-176 (THVLVVEQPK…KVTRLAHGLS (97 aa)).

The protein belongs to the RecR family.

Its function is as follows. May play a role in DNA repair. It seems to be involved in an RecBC-independent recombinational process of DNA repair. It may act with RecF and RecO. The chain is Recombination protein RecR from Levilactobacillus brevis (strain ATCC 367 / BCRC 12310 / CIP 105137 / JCM 1170 / LMG 11437 / NCIMB 947 / NCTC 947) (Lactobacillus brevis).